Here is a 182-residue protein sequence, read N- to C-terminus: MRRSAARGRAVSSTQTAMGAGAAIAVWAAALIALYSSCAAQTAPKTSSLRAANASDTIGRLIDGAEQLVSMRCMTSFEHEAAVTLYGPEYTPGGSMFEDLLTIIFKPQCSPPEAILWYKSGTAVRVNPYYLCRILVLALQGNPRGEVKFVVSRLIAEHAGGPLVRWPTTNVLRPEKTAPGGV.

The signal sequence occupies residues 1 to 39 (MRRSAARGRAVSSTQTAMGAGAAIAVWAAALIALYSSCA). Residues 52 to 182 (ANASDTIGRL…RPEKTAPGGV (131 aa)) form the gL alphaherpesvirus-type domain. Cys-73 and Cys-109 are joined by a disulfide.

Belongs to the herpesviridae glycoprotein L (gL) family. Alphaherpesvirinae gL subfamily. In terms of assembly, interacts with glycoprotein H (gH); this interaction is necessary for the correct processing and cell surface expression of gH. The heterodimer gH/gL seems to interact with gB trimers during fusion. O-glycosylated, and sialylated.

Its subcellular location is the virion membrane. The protein localises to the host cell membrane. It is found in the host Golgi apparatus. The protein resides in the host trans-Golgi network. In terms of biological role, the heterodimer glycoprotein H-glycoprotein L is required for the fusion of viral and plasma membranes leading to virus entry into the host cell. Acts as a functional inhibitor of gH and maintains gH in an inhibited form. Upon binding to host integrins, gL dissociates from gH leading to activation of the viral fusion glycoproteins gB and gH. This Amazona oratrix (yellow-headed parrot) protein is Envelope glycoprotein L.